Consider the following 808-residue polypeptide: Phospholipase D alpha 1 (808 aa).

The 125-residue stretch at 1–125 folds into the C2 domain; it reads MAHYLMHGTL…IRGDQVDRWV (125 aa). Position 186 (Asp-186) interacts with Ca(2+). Residues 326-364 enclose the PLD phosphodiesterase 1 domain; that stretch reads TMFTHHQKIVVVDGEMPSGESQMRRIVSFVGGIDLCDGR. Catalysis depends on residues His-331, Lys-333, and Asp-338. An a 1,2-diacyl-sn-glycero-3-phosphate-binding site is contributed by His-331. His-370 and His-404 together coordinate Ca(2+). A 1,2-diacyl-sn-glycero-3-phosphate is bound by residues Gln-520 and His-659. A PLD phosphodiesterase 2 domain is found at 654–681; it reads FMIYVHTKMMIVDDEYIIVGSANINQRS. Catalysis depends on residues His-659, Lys-661, and Asp-666. Glu-720 lines the Ca(2+) pocket.

It belongs to the phospholipase D family. C2-PLD subfamily. Requires Ca(2+) as cofactor.

It carries out the reaction a 1,2-diacyl-sn-glycero-3-phosphocholine + H2O = a 1,2-diacyl-sn-glycero-3-phosphate + choline + H(+). Hydrolyzes glycerol-phospholipids at the terminal phosphodiesteric bond. Plays an important role in various cellular processes. This chain is Phospholipase D alpha 1, found in Carica papaya (Papaya).